A 358-amino-acid chain; its full sequence is Arogenate dehydrogenase 2, chloroplastic (358 aa).

The transit peptide at 1-36 (MLLHFSPAKPLISPPNLRRNSPTFLISPPRSLRIRA) directs the protein to the chloroplast. One can recognise a Prephenate/arogenate dehydrogenase domain in the interval 59–338 (LKIAVLGFGN…KKTEQKLLND (280 aa)). The interval 336-358 (LNDGGVVPMNDISSSSSSSSSSS) is disordered. A compositionally biased stretch (low complexity) spans 348–358 (SSSSSSSSSSS).

This sequence belongs to the prephenate/arogenate dehydrogenase family. In terms of tissue distribution, expressed in roots, stems, leaves, flowers, siliques and seeds. More abundant in seeds.

The protein localises to the plastid. The protein resides in the chloroplast. The catalysed reaction is L-arogenate + NADP(+) = L-tyrosine + CO2 + NADPH. It participates in amino-acid biosynthesis; L-tyrosine biosynthesis; L-tyrosine from L-arogenate (NADP(+) route): step 1/1. Functionally, involved in the biosynthesis of tyrosine. Has a weak prephenate dehydrogenase activity. In Arabidopsis thaliana (Mouse-ear cress), this protein is Arogenate dehydrogenase 2, chloroplastic (TYRAAT2).